A 418-amino-acid chain; its full sequence is Glucose-1-phosphate adenylyltransferase (418 aa).

Alpha-D-glucose 1-phosphate is bound by residues Tyr-107, Gly-172, 187-188 (EK), and Ser-205.

Belongs to the bacterial/plant glucose-1-phosphate adenylyltransferase family. Homotetramer.

It catalyses the reaction alpha-D-glucose 1-phosphate + ATP + H(+) = ADP-alpha-D-glucose + diphosphate. It functions in the pathway glycan biosynthesis; glycogen biosynthesis. Its function is as follows. Involved in the biosynthesis of ADP-glucose, a building block required for the elongation reactions to produce glycogen. Catalyzes the reaction between ATP and alpha-D-glucose 1-phosphate (G1P) to produce pyrophosphate and ADP-Glc. The chain is Glucose-1-phosphate adenylyltransferase from Gemmatimonas aurantiaca (strain DSM 14586 / JCM 11422 / NBRC 100505 / T-27).